We begin with the raw amino-acid sequence, 443 residues long: Ribulose bisphosphate carboxylase large chain (443 aa).

Asparagine 89 and threonine 139 together coordinate substrate. Lysine 141 serves as the catalytic Proton acceptor. Lysine 143 serves as a coordination point for substrate. Mg(2+) contacts are provided by lysine 167, aspartate 169, and glutamate 170. Lysine 167 carries the post-translational modification N6-carboxylysine. Histidine 260 (proton acceptor) is an active-site residue. Substrate is bound by residues arginine 261, histidine 293, and serine 345.

This sequence belongs to the RuBisCO large chain family. Type I subfamily. As to quaternary structure, heterohexadecamer of 8 large chains and 8 small chains; disulfide-linked. The disulfide link is formed within the large subunit homodimers. The cofactor is Mg(2+). Post-translationally, the disulfide bond which can form in the large chain dimeric partners within the hexadecamer appears to be associated with oxidative stress and protein turnover.

The protein localises to the plastid. Its subcellular location is the chloroplast. The enzyme catalyses 2 (2R)-3-phosphoglycerate + 2 H(+) = D-ribulose 1,5-bisphosphate + CO2 + H2O. It carries out the reaction D-ribulose 1,5-bisphosphate + O2 = 2-phosphoglycolate + (2R)-3-phosphoglycerate + 2 H(+). In terms of biological role, ruBisCO catalyzes two reactions: the carboxylation of D-ribulose 1,5-bisphosphate, the primary event in carbon dioxide fixation, as well as the oxidative fragmentation of the pentose substrate in the photorespiration process. Both reactions occur simultaneously and in competition at the same active site. This chain is Ribulose bisphosphate carboxylase large chain, found in Callitriche heterophylla (Large water-starwort).